The sequence spans 351 residues: Pentatricopeptide repeat-containing protein At2g40240, mitochondrial (351 aa).

Residues 1 to 27 (MSLLRRRFVKQSVNCITFLQILAERSF) constitute a mitochondrion transit peptide. PPR repeat units follow at residues 106 to 140 (RKNA…RLGL), 141 to 175 (TPST…SVSM), 176 to 210 (DVTA…GNSP), 211 to 245 (DSRS…GVTV), 246 to 280 (LYST…DLRL), and 281 to 315 (DSES…GLRM).

It belongs to the PPR family. P subfamily.

The protein localises to the mitochondrion. The polypeptide is Pentatricopeptide repeat-containing protein At2g40240, mitochondrial (Arabidopsis thaliana (Mouse-ear cress)).